We begin with the raw amino-acid sequence, 241 residues long: Methylthioribulose-1-phosphate dehydratase (241 aa).

Position 102 (Cys-102) interacts with substrate. Residues His-120, His-122, and His-199 each contribute to the Zn(2+) site.

The protein belongs to the aldolase class II family. MtnB subfamily. Requires Zn(2+) as cofactor.

It localises to the cytoplasm. It carries out the reaction 5-(methylsulfanyl)-D-ribulose 1-phosphate = 5-methylsulfanyl-2,3-dioxopentyl phosphate + H2O. It functions in the pathway amino-acid biosynthesis; L-methionine biosynthesis via salvage pathway; L-methionine from S-methyl-5-thio-alpha-D-ribose 1-phosphate: step 2/6. In terms of biological role, catalyzes the dehydration of methylthioribulose-1-phosphate (MTRu-1-P) into 2,3-diketo-5-methylthiopentyl-1-phosphate (DK-MTP-1-P). The polypeptide is Methylthioribulose-1-phosphate dehydratase (Coprinopsis cinerea (strain Okayama-7 / 130 / ATCC MYA-4618 / FGSC 9003) (Inky cap fungus)).